The primary structure comprises 667 residues: DNA ligase (667 aa).

Residues 32-36, 81-82, and Glu-110 contribute to the NAD(+) site; these read DSEYD and SL. Lys-112 functions as the N6-AMP-lysine intermediate in the catalytic mechanism. Residues Arg-133, Glu-167, Lys-283, and Lys-307 each contribute to the NAD(+) site. Cys-401, Cys-404, Cys-419, and Cys-424 together coordinate Zn(2+). A BRCT domain is found at 586–667; the sequence is EGHPEFSGKT…FVDKQNELNS (82 aa).

Belongs to the NAD-dependent DNA ligase family. LigA subfamily. Mg(2+) serves as cofactor. The cofactor is Mn(2+).

It catalyses the reaction NAD(+) + (deoxyribonucleotide)n-3'-hydroxyl + 5'-phospho-(deoxyribonucleotide)m = (deoxyribonucleotide)n+m + AMP + beta-nicotinamide D-nucleotide.. In terms of biological role, DNA ligase that catalyzes the formation of phosphodiester linkages between 5'-phosphoryl and 3'-hydroxyl groups in double-stranded DNA using NAD as a coenzyme and as the energy source for the reaction. It is essential for DNA replication and repair of damaged DNA. The protein is DNA ligase of Staphylococcus aureus (strain USA300).